A 127-amino-acid polypeptide reads, in one-letter code: Mediator of RNA polymerase II transcription subunit 31 (127 aa).

This sequence belongs to the Mediator complex subunit 31 family. In terms of assembly, component of the Mediator complex.

Its subcellular location is the nucleus. Functionally, component of the Mediator complex, a coactivator involved in the regulated transcription of nearly all RNA polymerase II-dependent genes. Mediator functions as a bridge to convey information from gene-specific regulatory proteins to the basal RNA polymerase II transcription machinery. Mediator is recruited to promoters by direct interactions with regulatory proteins and serves as a scaffold for the assembly of a functional preinitiation complex with RNA polymerase II and the general transcription factors. The chain is Mediator of RNA polymerase II transcription subunit 31 (SOH1) from Eremothecium gossypii (strain ATCC 10895 / CBS 109.51 / FGSC 9923 / NRRL Y-1056) (Yeast).